A 75-amino-acid polypeptide reads, in one-letter code: Transaldolase (75 aa).

This sequence belongs to the transaldolase family. Type 1 subfamily. In terms of assembly, homodimer. Post-translationally, phosphorylated. Predominantly expressed in Y-organs.

It localises to the cytoplasm. It carries out the reaction D-sedoheptulose 7-phosphate + D-glyceraldehyde 3-phosphate = D-erythrose 4-phosphate + beta-D-fructose 6-phosphate. It participates in carbohydrate degradation; pentose phosphate pathway; D-glyceraldehyde 3-phosphate and beta-D-fructose 6-phosphate from D-ribose 5-phosphate and D-xylulose 5-phosphate (non-oxidative stage): step 2/3. Transaldolase is important for the balance of metabolites in the pentose-phosphate pathway. May play a role in the conversion of sterols into ecdysteroids via NADPH. In Carcinus maenas (Common shore crab), this protein is Transaldolase.